Consider the following 299-residue polypeptide: Diphthine methyl ester synthase 1 (299 aa).

S-adenosyl-L-methionine contacts are provided by residues L9, D85, G88, 113–114 (SV), L164, L222, and H247.

This sequence belongs to the diphthine synthase family.

Its subcellular location is the cytoplasm. The enzyme catalyses 2-[(3S)-amino-3-carboxypropyl]-L-histidyl-[translation elongation factor 2] + 4 S-adenosyl-L-methionine = diphthine methyl ester-[translation elongation factor 2] + 4 S-adenosyl-L-homocysteine + 3 H(+). It functions in the pathway protein modification; peptidyl-diphthamide biosynthesis. Its function is as follows. S-adenosyl-L-methionine-dependent methyltransferase that catalyzes four methylations of the modified target histidine residue in translation elongation factor 2 (EF-2), to form an intermediate called diphthine methyl ester. The four successive methylation reactions represent the second step of diphthamide biosynthesis. This Candida albicans (strain SC5314 / ATCC MYA-2876) (Yeast) protein is Diphthine methyl ester synthase 1 (DPH5).